A 425-amino-acid polypeptide reads, in one-letter code: Pleckstrin homology domain-containing family A member 2 (425 aa).

One can recognise a PH 1 domain in the interval 7–113; the sequence is QNRICGFLDI…WVEALNQASK (107 aa). A Glycyl lysine isopeptide (Lys-Gly) (interchain with G-Cter in SUMO2) cross-link involves residue K141. S184 carries the post-translational modification Phosphoserine. One can recognise a PH 2 domain in the interval 198–298; that stretch reads PLIKSGYCVK…WIKEIGAAVQ (101 aa). Residues 312 to 330 show a composition bias toward low complexity; sequence SISLTRPGSSSLSSGPNSI. The tract at residues 312-332 is disordered; that stretch reads SISLTRPGSSSLSSGPNSILC. A phosphoserine mark is found at S314 and S349. The disordered stretch occupies residues 352-425; that stretch reads SSWQPWTPVP…DDENIRTSDV (74 aa). Residues 400-410 are compositionally biased toward basic and acidic residues; it reads RSEPQHPKEKP.

In terms of assembly, binds MPDZ and PTPN13. In terms of tissue distribution, highly expressed in heart, kidney, spleen and peripheral blood leukocytes. Detected at lower levels in brain, skeletal muscle, colon, thymus, liver, small intestine, placenta and lung.

It localises to the cytoplasm. The protein resides in the cell membrane. It is found in the nucleus. In terms of biological role, binds specifically to phosphatidylinositol 3,4-diphosphate (PtdIns3,4P2), but not to other phosphoinositides. May recruit other proteins to the plasma membrane. The sequence is that of Pleckstrin homology domain-containing family A member 2 (PLEKHA2) from Homo sapiens (Human).